A 69-amino-acid chain; its full sequence is Putative defensin-like protein 312 (69 aa).

A signal peptide spans 1–19; that stretch reads MSCFSFLVYFLLFIVTKMS. A disulfide bridge links Cys45 with Cys57.

It belongs to the DEFL family.

The protein resides in the secreted. This Arabidopsis thaliana (Mouse-ear cress) protein is Putative defensin-like protein 312.